The chain runs to 143 residues: Competence protein ComGD (143 aa).

Positions 1–10 (MNIKLNEEKG) are excised as a propeptide. Phe11 is subject to N-methylphenylalanine. A helical membrane pass occupies residues 11-31 (FTLLESLLVLSLASILLVAVF).

The transformation pili are flexible filaments, consisting mainly of the major pilin ComGC and smaller amounts of the minor pilins, including at least ComGD, ComGF and ComGG. Interacts with ComGF. Interacts with ComGG. Processing of ComGD in competent cells requires ComC.

The protein localises to the cell membrane. Its subcellular location is the cell surface. Its function is as follows. Required for formation of the type IV-like pilus (T4P) that plays a role in transformation. Transformation pili are dynamically extended and retracted, perhaps thereby promoting DNA uptake and transformation. Required for transformation and DNA binding. The protein is Competence protein ComGD (comGD) of Bacillus subtilis (strain 168).